A 316-amino-acid chain; its full sequence is Acetyl-coenzyme A carboxylase carboxyl transferase subunit alpha (316 aa).

The region spanning 24 to 291 (NIKDKADIVD…KEALIQQLNE (268 aa)) is the CoA carboxyltransferase C-terminal domain.

Belongs to the AccA family. In terms of assembly, acetyl-CoA carboxylase is a heterohexamer composed of biotin carboxyl carrier protein (AccB), biotin carboxylase (AccC) and two subunits each of ACCase subunit alpha (AccA) and ACCase subunit beta (AccD).

Its subcellular location is the cytoplasm. The catalysed reaction is N(6)-carboxybiotinyl-L-lysyl-[protein] + acetyl-CoA = N(6)-biotinyl-L-lysyl-[protein] + malonyl-CoA. The protein operates within lipid metabolism; malonyl-CoA biosynthesis; malonyl-CoA from acetyl-CoA: step 1/1. Component of the acetyl coenzyme A carboxylase (ACC) complex. First, biotin carboxylase catalyzes the carboxylation of biotin on its carrier protein (BCCP) and then the CO(2) group is transferred by the carboxyltransferase to acetyl-CoA to form malonyl-CoA. The protein is Acetyl-coenzyme A carboxylase carboxyl transferase subunit alpha of Ruthia magnifica subsp. Calyptogena magnifica.